The following is a 703-amino-acid chain: Polyribonucleotide nucleotidyltransferase (703 aa).

Residues D486 and D492 each contribute to the Mg(2+) site. The KH domain maps to 554-613; that stretch reads PKIITTNIDPEKIRDVIGPGGKMINKIIAETGVKIDIEEDGRVYILTPDSAAAQKALKII. Residues 623–691 enclose the S1 motif domain; it reads GEVYLGKVVR…KQGRINLSRK (69 aa).

Belongs to the polyribonucleotide nucleotidyltransferase family. Mg(2+) is required as a cofactor.

Its subcellular location is the cytoplasm. The enzyme catalyses RNA(n+1) + phosphate = RNA(n) + a ribonucleoside 5'-diphosphate. Involved in mRNA degradation. Catalyzes the phosphorolysis of single-stranded polyribonucleotides processively in the 3'- to 5'-direction. This Ruminiclostridium cellulolyticum (strain ATCC 35319 / DSM 5812 / JCM 6584 / H10) (Clostridium cellulolyticum) protein is Polyribonucleotide nucleotidyltransferase.